A 504-amino-acid polypeptide reads, in one-letter code: AMP phosphorylase (504 aa).

AMP contacts are provided by residues G169, 195–200 (SRAITS), and T204. The active-site Proton donor is D257. AMP-binding residues include S265 and K289.

The protein belongs to the thymidine/pyrimidine-nucleoside phosphorylase family. Type 2 subfamily.

It catalyses the reaction AMP + phosphate = alpha-D-ribose 1,5-bisphosphate + adenine. The enzyme catalyses CMP + phosphate = cytosine + alpha-D-ribose 1,5-bisphosphate. It carries out the reaction UMP + phosphate = alpha-D-ribose 1,5-bisphosphate + uracil. In terms of biological role, catalyzes the conversion of AMP and phosphate to adenine and ribose 1,5-bisphosphate (R15P). Exhibits phosphorylase activity toward CMP and UMP in addition to AMP. Functions in an archaeal AMP degradation pathway, together with R15P isomerase and RubisCO. In Methanococcus aeolicus (strain ATCC BAA-1280 / DSM 17508 / OCM 812 / Nankai-3), this protein is AMP phosphorylase.